The following is a 199-amino-acid chain: Lipid A acyltransferase PagP (199 aa).

A signal peptide spans 1–25 (MNYKDIINACILSGVFLLHSPSALA). Catalysis depends on residues His74, Asp117, and Ser118.

This sequence belongs to the lipid A palmitoyltransferase family. In terms of assembly, homodimer.

It localises to the cell outer membrane. It catalyses the reaction a lipid A + a 1,2-diacyl-sn-glycero-3-phosphocholine = a hepta-acyl lipid A + a 2-acyl-sn-glycero-3-phosphocholine. The catalysed reaction is a lipid IVA + a 1,2-diacyl-sn-glycero-3-phosphocholine = a lipid IVB + a 2-acyl-sn-glycero-3-phosphocholine. It carries out the reaction a lipid IIA + a 1,2-diacyl-sn-glycero-3-phosphocholine = a lipid IIB + a 2-acyl-sn-glycero-3-phosphocholine. Transfers a fatty acid residue from the sn-1 position of a phospholipid to the N-linked hydroxyfatty acid chain on the proximal unit of lipid A or its precursors. The chain is Lipid A acyltransferase PagP from Yersinia pestis bv. Antiqua (strain Antiqua).